A 73-amino-acid chain; its full sequence is Homeodomain-only protein (73 aa).

The segment at residues A3–E62 is a DNA-binding region (homeobox; degenerate).

As to quaternary structure, interacts with serum response factor (SRF). Component of a large complex containing histone deacetylases such as HDAC2. Interacts with the acetylated forms of HSPA1A and HSPA1B. Interacts with HSPA8. As to expression, expressed in the embryonic and adult heart and in the adult brain, liver, lung, skeletal muscle, intestine and spleen. Throughout embryonic and postnatal development, it is expressed in the myocardium.

The protein resides in the nucleus. The protein localises to the cytoplasm. Its function is as follows. Atypical homeodomain protein which does not bind DNA and is required to modulate cardiac growth and development. Acts via its interaction with SRF, thereby modulating the expression of SRF-dependent cardiac-specific genes and cardiac development. Prevents SRF-dependent transcription either by inhibiting SRF binding to DNA or by recruiting histone deacetylase (HDAC) proteins that prevent transcription by SRF. Overexpression causes cardiac hypertrophy. Acts as a co-chaperone for HSPA1A and HSPA1B chaperone proteins and assists in chaperone-mediated protein refolding. In Mus musculus (Mouse), this protein is Homeodomain-only protein (Hopx).